A 218-amino-acid polypeptide reads, in one-letter code: MTDLSELNFDPSGLIPVVTQDARSGAVLMQAYADRAAVERTLDTREATYYSRSRGEQWVKGQTSGHTQRVVSVHVDCDGDSLLYRVEQTGPACHTGEYSCFYRPLLEDDAPDTGLDGTLERVYATITERLATLPEGSYVARLHAGGLDRVLKKISEEAGEVLLAAKNADRAELATETADLLFHTLFALAEVGVSPADVAAVLQGREGKSGLKGPKEVG.

A phosphoribosyl-AMP cyclohydrolase region spans residues 1–118; sequence MTDLSELNFD…DAPDTGLDGT (118 aa). The segment at 119–218 is phosphoribosyl-ATP pyrophosphohydrolase; it reads LERVYATITE…SGLKGPKEVG (100 aa).

The protein in the N-terminal section; belongs to the PRA-CH family. It in the C-terminal section; belongs to the PRA-PH family.

It is found in the cytoplasm. The enzyme catalyses 1-(5-phospho-beta-D-ribosyl)-ATP + H2O = 1-(5-phospho-beta-D-ribosyl)-5'-AMP + diphosphate + H(+). It carries out the reaction 1-(5-phospho-beta-D-ribosyl)-5'-AMP + H2O = 1-(5-phospho-beta-D-ribosyl)-5-[(5-phospho-beta-D-ribosylamino)methylideneamino]imidazole-4-carboxamide. It functions in the pathway amino-acid biosynthesis; L-histidine biosynthesis; L-histidine from 5-phospho-alpha-D-ribose 1-diphosphate: step 2/9. The protein operates within amino-acid biosynthesis; L-histidine biosynthesis; L-histidine from 5-phospho-alpha-D-ribose 1-diphosphate: step 3/9. In Deinococcus radiodurans (strain ATCC 13939 / DSM 20539 / JCM 16871 / CCUG 27074 / LMG 4051 / NBRC 15346 / NCIMB 9279 / VKM B-1422 / R1), this protein is Histidine biosynthesis bifunctional protein HisIE (hisI).